Consider the following 289-residue polypeptide: S-methyl-5'-thioadenosine phosphorylase (289 aa).

Residues Ser11, 53–54 (RH), and 86–87 (SA) contribute to the phosphate site. Residue Met187 participates in substrate binding. Thr188 serves as a coordination point for phosphate. Substrate is bound at residue 211–213 (DYD).

It belongs to the PNP/MTAP phosphorylase family. MTAP subfamily. Homohexamer. Dimer of a homotrimer.

The catalysed reaction is S-methyl-5'-thioadenosine + phosphate = 5-(methylsulfanyl)-alpha-D-ribose 1-phosphate + adenine. It participates in amino-acid biosynthesis; L-methionine biosynthesis via salvage pathway; S-methyl-5-thio-alpha-D-ribose 1-phosphate from S-methyl-5'-thioadenosine (phosphorylase route): step 1/1. Functionally, catalyzes the reversible phosphorylation of S-methyl-5'-thioadenosine (MTA) to adenine and 5-methylthioribose-1-phosphate. Involved in the breakdown of MTA, a major by-product of polyamine biosynthesis. Responsible for the first step in the methionine salvage pathway after MTA has been generated from S-adenosylmethionine. Has broad substrate specificity with 6-aminopurine nucleosides as preferred substrates. In Thermosynechococcus vestitus (strain NIES-2133 / IAM M-273 / BP-1), this protein is S-methyl-5'-thioadenosine phosphorylase.